A 988-amino-acid chain; its full sequence is DNA polymerase (988 aa).

Belongs to the DNA polymerase type-B family. In terms of assembly, interacts with A20. Component of the Uracil-DNA glycosylase(UDG)-A20-polymerase complex; A20 and UDG form a heterodimeric processivity factor that associates with E9 to form the processive polymerase holoenzyme.

The catalysed reaction is DNA(n) + a 2'-deoxyribonucleoside 5'-triphosphate = DNA(n+1) + diphosphate. Functionally, catalyzes DNA synthesis. Acquires processivity by associating with a heterodimeric processivity factor comprised of the viral A20 and D4 proteins, thereby forming the DNA polymerase holoenzyme. Displays 3'- to 5' exonuclease activity. Might participate in viral DNA recombination. Does not perform translesion synthesis across an abasic site. This chain is DNA polymerase (POL), found in Vertebrata (FPV).